The chain runs to 361 residues: Probable dual-specificity RNA methyltransferase RlmN (361 aa).

E104 functions as the Proton acceptor in the catalytic mechanism. The Radical SAM core domain maps to 110–343 (HEYGNSVCVT…VTIRREQGHD (234 aa)). C117 and C348 are oxidised to a cystine. [4Fe-4S] cluster contacts are provided by C124, C128, and C131. S-adenosyl-L-methionine is bound by residues 174 to 175 (GE), S206, 229 to 231 (SLH), and N305. C348 serves as the catalytic S-methylcysteine intermediate.

This sequence belongs to the radical SAM superfamily. RlmN family. [4Fe-4S] cluster is required as a cofactor.

Its subcellular location is the cytoplasm. The catalysed reaction is adenosine(2503) in 23S rRNA + 2 reduced [2Fe-2S]-[ferredoxin] + 2 S-adenosyl-L-methionine = 2-methyladenosine(2503) in 23S rRNA + 5'-deoxyadenosine + L-methionine + 2 oxidized [2Fe-2S]-[ferredoxin] + S-adenosyl-L-homocysteine. The enzyme catalyses adenosine(37) in tRNA + 2 reduced [2Fe-2S]-[ferredoxin] + 2 S-adenosyl-L-methionine = 2-methyladenosine(37) in tRNA + 5'-deoxyadenosine + L-methionine + 2 oxidized [2Fe-2S]-[ferredoxin] + S-adenosyl-L-homocysteine. Specifically methylates position 2 of adenine 2503 in 23S rRNA and position 2 of adenine 37 in tRNAs. The polypeptide is Probable dual-specificity RNA methyltransferase RlmN (Bacillus licheniformis (strain ATCC 14580 / DSM 13 / JCM 2505 / CCUG 7422 / NBRC 12200 / NCIMB 9375 / NCTC 10341 / NRRL NRS-1264 / Gibson 46)).